The following is a 1616-amino-acid chain: Helicase SWR1 (1616 aa).

The span at 1 to 10 (MARGGSRRRN) shows a compositional bias: basic residues. Disordered regions lie at residues 1 to 53 (MARG…IKKE) and 185 to 238 (KTLE…SDMD). A compositionally biased stretch (polar residues) spans 11–26 (TSVISTQKIEPSNEST). Low complexity predominate over residues 200–209 (PSKTSKGNQK). The region spanning 396–468 (IPKTQGVTIH…KEQNLKRISK (73 aa)) is the HSA domain. Disordered stretches follow at residues 521–565 (NKSS…VNMD), 583–614 (IDQS…DANK), and 645–774 (LIEK…VPLP). The segment covering 529–538 (EVDTENENET) has biased composition (acidic residues). The span at 645 to 654 (LIEKFSKEDE) shows a compositional bias: basic and acidic residues. Residues 705–737 (TEDEEDSNDDVSADSDGNVSDDENMSTTDEEDE) are compositionally biased toward acidic residues. Basic and acidic residues predominate over residues 738 to 751 (PKTPKSSEDPKMDE). Residues 752 to 763 (KENESDVLEEEV) are compositionally biased toward acidic residues. Residues 793–958 (ASLYNNGTNG…WSLLYFLMPS (166 aa)) enclose the Helicase ATP-binding domain. 806-813 (DEMGLGKT) is a binding site for ATP. Residues 909 to 912 (DEAH) carry the DEAH box motif. A disordered region spans residues 992–1013 (NGTSSDVIDENDKTTQRMDEET). The span at 1001-1013 (ENDKTTQRMDEET) shows a compositional bias: basic and acidic residues. The region spanning 1333-1486 (KLQKLATLLQ…NVVIQEGEFT (154 aa)) is the Helicase C-terminal domain. A disordered region spans residues 1545 to 1576 (DDEDFDEESKAATNTATPSQTPGPDTAGSGIV). Polar residues predominate over residues 1555-1567 (AATNTATPSQTPG).

This sequence belongs to the SNF2/RAD54 helicase family. SWR1 subfamily. As to quaternary structure, component of the SWR1 chromatin-remodeling complex.

Its subcellular location is the nucleus. The enzyme catalyses ATP + H2O = ADP + phosphate + H(+). Its function is as follows. Catalytic component of the SWR1 complex which mediates the ATP-dependent exchange of histone H2A for the H2A variant HZT1 leading to transcriptional regulation of selected genes by chromatin remodeling. This is Helicase SWR1 (SWR1) from Debaryomyces hansenii (strain ATCC 36239 / CBS 767 / BCRC 21394 / JCM 1990 / NBRC 0083 / IGC 2968) (Yeast).